Consider the following 226-residue polypeptide: Fibronectin type III domain-containing protein 9 (226 aa).

A Fibronectin type-III domain is found at 1-101 (MNIEVGNVSH…FHTLDKSPLA (101 aa)). A helical membrane pass occupies residues 113-133 (LWVLMAILLACFTAVLAFICL).

The protein localises to the membrane. The protein is Fibronectin type III domain-containing protein 9 (Fndc9) of Mus musculus (Mouse).